The primary structure comprises 418 residues: Aminodeoxyfutalosine deaminase (418 aa).

Residues H97 and H99 each contribute to the Zn(2+) site. Residues E173 and H211 each contribute to the substrate site. H238 provides a ligand contact to Zn(2+). E241 (proton donor) is an active-site residue. A Zn(2+)-binding site is contributed by D352.

This sequence belongs to the metallo-dependent hydrolases superfamily. The cofactor is Zn(2+).

It carries out the reaction 6-amino-6-deoxyfutalosine + H2O + H(+) = futalosine + NH4(+). Its pathway is quinol/quinone metabolism; menaquinone biosynthesis. In terms of biological role, catalyzes the deamination of aminodeoxyfutalosine (AFL) into futalosine (FL). To a lesser extent, can also deaminate 5'-deoxyadenosine, 5'-methylthioadenosine, 2'-deoxyadenosine, adenosine, 1-(6-amino-9H-purin-9-yl)-1-deoxy-N-ethyl-beta-D-ribofuranuronamide (NECA), and S-adenosylhomocysteine. The protein is Aminodeoxyfutalosine deaminase of Deinococcus radiodurans (strain ATCC 13939 / DSM 20539 / JCM 16871 / CCUG 27074 / LMG 4051 / NBRC 15346 / NCIMB 9279 / VKM B-1422 / R1).